The chain runs to 261 residues: 5'-nucleotidase SurE (261 aa).

A divalent metal cation contacts are provided by Asp-8, Asp-9, Ser-40, and Asn-94.

The protein belongs to the SurE nucleotidase family. The cofactor is a divalent metal cation.

It localises to the cytoplasm. It catalyses the reaction a ribonucleoside 5'-phosphate + H2O = a ribonucleoside + phosphate. Nucleotidase that shows phosphatase activity on nucleoside 5'-monophosphates. This is 5'-nucleotidase SurE from Anaplasma marginale (strain Florida).